Consider the following 310-residue polypeptide: GTPase Era (310 aa).

Residues 17–184 enclose the Era-type G domain; sequence HSGFVALIGA…LDYLAQALPA (168 aa). Positions 25 to 32 are G1; the sequence is GAPNAGKS. 25–32 is a binding site for GTP; sequence GAPNAGKS. A G2 region spans residues 51-55; the sequence is QTTRA. Positions 72–75 are G3; that stretch reads DTPG. GTP is bound by residues 72–76 and 134–137; these read DTPGI and NKVD. Positions 134 to 137 are G4; the sequence is NKVD. Positions 163–165 are G5; sequence VSA. The 78-residue stretch at 215–292 folds into the KH type-2 domain; that stretch reads LHQELPYSSH…HLFLFVKVRE (78 aa).

This sequence belongs to the TRAFAC class TrmE-Era-EngA-EngB-Septin-like GTPase superfamily. Era GTPase family. In terms of assembly, monomer.

The protein localises to the cytoplasm. Its subcellular location is the cell inner membrane. In terms of biological role, an essential GTPase that binds both GDP and GTP, with rapid nucleotide exchange. Plays a role in 16S rRNA processing and 30S ribosomal subunit biogenesis and possibly also in cell cycle regulation and energy metabolism. This is GTPase Era from Mesorhizobium japonicum (strain LMG 29417 / CECT 9101 / MAFF 303099) (Mesorhizobium loti (strain MAFF 303099)).